Consider the following 316-residue polypeptide: Lys-63-specific deubiquitinase BRCC36 (316 aa).

The residue at position 2 (A2) is an N-acetylalanine. The MPN domain occupies 12-179 (VHLESDAFLV…YTCFQSIQAQ (168 aa)). Zn(2+) is bound by residues H122, H124, and D135. The JAMM motif signature appears at 122-135 (HSHPHITVWPSHVD). S258 bears the Phosphoserine mark.

The protein belongs to the peptidase M67A family. BRCC36 subfamily. In terms of assembly, component of the ARISC complex, at least composed of UIMC1/RAP80, ABRAXAS1, BRCC3/BRCC36, BABAM2 and BABAM1/NBA1. Component of the BRCA1-A complex, at least composed of BRCA1, BARD1, UIMC1/RAP80, ABRAXAS1, BRCC3/BRCC36, BABAM2 and BABAM1/NBA1. In the BRCA1-A complex, interacts directly with ABRAXAS1 and BABAM2. Component of the BRISC complex, at least composed of ABRAXAS2, BRCC3/BRCC36, BABAM2 and BABAM1/NBA1. Identified in a complex with SHMT2 and the other subunits of the BRISC complex. In the BRISC complex, interacts directly with ABRAXAS2. Identified in a complex with ABRAXAS2 and NUMA1. The BRISC complex interacts with the CSN complex. Component of the BRCA1/BRCA2 containing complex (BRCC), which also contains BRCA1, BRCA2, BARD1, BABAM2 and RAD51. BRCC is a ubiquitin E3 ligase complex that enhances cellular survival following DNA damage. Interacts with BRCA1. Binds polyubiquitin. Interacts with PWWP2B. Interacts with HDAC1; this interaction is enhanced in the presence of PWWP2B. Requires Zn(2+) as cofactor.

The protein resides in the nucleus. It is found in the cytoplasm. It localises to the cytoskeleton. Its subcellular location is the spindle pole. Its function is as follows. Metalloprotease that specifically cleaves 'Lys-63'-linked polyubiquitin chains. Does not have activity toward 'Lys-48'-linked polyubiquitin chains. Component of the BRCA1-A complex, a complex that specifically recognizes 'Lys-63'-linked ubiquitinated histones H2A and H2AX at DNA lesions sites, leading to target the BRCA1-BARD1 heterodimer to sites of DNA damage at double-strand breaks (DSBs). In the BRCA1-A complex, it specifically removes 'Lys-63'-linked ubiquitin on histones H2A and H2AX, antagonizing the RNF8-dependent ubiquitination at double-strand breaks (DSBs). Catalytic subunit of the BRISC complex, a multiprotein complex that specifically cleaves 'Lys-63'-linked ubiquitin in various substrates. Mediates the specific 'Lys-63'-specific deubiquitination associated with the COP9 signalosome complex (CSN), via the interaction of the BRISC complex with the CSN complex. The BRISC complex is required for normal mitotic spindle assembly and microtubule attachment to kinetochores via its role in deubiquitinating NUMA1. Plays a role in interferon signaling via its role in the deubiquitination of the interferon receptor IFNAR1; deubiquitination increases IFNAR1 activity by enhancing its stability and cell surface expression. Acts as a regulator of the NLRP3 inflammasome by mediating deubiquitination of NLRP3, leading to NLRP3 inflammasome assembly. Down-regulates the response to bacterial lipopolysaccharide (LPS) via its role in IFNAR1 deubiquitination. Deubiquitinates HDAC1 and PWWP2B leading to their stabilization. In Callithrix jacchus (White-tufted-ear marmoset), this protein is Lys-63-specific deubiquitinase BRCC36 (BRCC3).